The primary structure comprises 89 residues: MALTKEEKKQIIEKFRLNENDSGSPEVQIALLTERIKRLTEHLKVHKKDYHSRVGLLKMIGRRRKLLKYLQEKDFERYKKLIQELGLRK.

Belongs to the universal ribosomal protein uS15 family. Part of the 30S ribosomal subunit. Forms a bridge to the 50S subunit in the 70S ribosome, contacting the 23S rRNA.

Functionally, one of the primary rRNA binding proteins, it binds directly to 16S rRNA where it helps nucleate assembly of the platform of the 30S subunit by binding and bridging several RNA helices of the 16S rRNA. Its function is as follows. Forms an intersubunit bridge (bridge B4) with the 23S rRNA of the 50S subunit in the ribosome. The protein is Small ribosomal subunit protein uS15 of Dictyoglomus thermophilum (strain ATCC 35947 / DSM 3960 / H-6-12).